Here is a 639-residue protein sequence, read N- to C-terminus: Pheromone B alpha 1 receptor (639 aa).

The next 7 membrane-spanning stretches (helical) occupy residues 8-28, 37-57, 70-90, 113-133, 163-183, 209-229, and 272-292; these read LFPI…PWHL, FFMM…VAWA, ISIR…LCII, ILVD…LQYI, VWPV…LLQF, MALA…VIVL, and LTRW…GFAE. Disordered stretches follow at residues 375–416, 490–516, 532–563, and 611–639; these read PRPM…SSPI, TVPH…SSSA, SADV…RLPS, and TTAG…RASV. The segment covering 383–398 has biased composition (low complexity); the sequence is SSSGFSSSDSTRFGSS. 2 stretches are compositionally biased toward low complexity: residues 541 to 551 and 611 to 621; these read GSSAGGVASTS and TTAGAPATTTP.

It belongs to the G-protein coupled receptor 4 family.

The protein localises to the membrane. Its function is as follows. Receptor for the BAP1 pheromone, a prenylated mating factor. Has a role in the initiation of B-regulated nuclear migration. This chain is Pheromone B alpha 1 receptor (BAR1), found in Schizophyllum commune (Split gill fungus).